Reading from the N-terminus, the 681-residue chain is Transmembrane protein 214-A (681 aa).

2 disordered regions span residues 1-41 (MASG…GTAP) and 58-99 (KKQN…GSRQ). N-linked (GlcNAc...) asparagine glycans are attached at residues asparagine 300 and asparagine 324. The next 2 membrane-spanning stretches (helical) occupy residues 471-491 (GFPW…FVFY) and 608-628 (LLLH…EAAV).

It belongs to the TMEM214 family. As to quaternary structure, constitutively interacts with CASP4; required for the localization of procaspase 4 to the ER.

The protein resides in the endoplasmic reticulum membrane. Functionally, critical mediator, in cooperation with CASP4, of endoplasmic reticulum-stress induced apoptosis. Required or the activation of CASP4 following endoplasmic reticulum stress. The polypeptide is Transmembrane protein 214-A (tmem214-a) (Xenopus laevis (African clawed frog)).